The sequence spans 144 residues: Putative pre-16S rRNA nuclease (144 aa).

It belongs to the YqgF nuclease family.

Its subcellular location is the cytoplasm. Its function is as follows. Could be a nuclease involved in processing of the 5'-end of pre-16S rRNA. The sequence is that of Putative pre-16S rRNA nuclease from Ralstonia nicotianae (strain ATCC BAA-1114 / GMI1000) (Ralstonia solanacearum).